A 161-amino-acid chain; its full sequence is Periplasmic chaperone Spy (161 aa).

The N-terminal stretch at 1–23 is a signal peptide; sequence MRKLTALFVASTLALGAANLAHA. A disordered region spans residues 140–161; the sequence is ANFEKRLTERPAAKGKMPATAE. Basic and acidic residues predominate over residues 142–151; the sequence is FEKRLTERPA.

Belongs to the CpxP/Spy family. Homodimer.

The protein localises to the periplasm. An ATP-independent periplasmic chaperone, decreases protein aggregation and helps protein refolding. Binds substrate over a large region of its convex inner surface. Substrate protein folds while it is bound to chaperone. Increasing Spy flexibility increases its substrate affinity and overall chaperone activity (shown for 3 different substrates). Protects proteins in vitro against tannin inactivation; tannins have antimicrobial activity. Overexpression enhances the stability of otherwise unstable periplasmic proteins. The polypeptide is Periplasmic chaperone Spy (Escherichia coli (strain K12)).